The primary structure comprises 690 residues: Iron-sulfur clusters transporter ATM1, mitochondrial (690 aa).

The transit peptide at 1-26 (MLLLPRCPVIGRIVRSKFRSGLIRNH) directs the protein to the mitochondrion. At 27–110 (SPVIFTVSKL…PKGNNKVRIR (84 aa)) the chain is on the mitochondrial matrix side. A helical transmembrane segment spans residues 111–132 (VLIALGLLISAKILNVQVPFFF). The region spanning 111–401 (VLIALGLLIS…LGSVYRDLKQ (291 aa)) is the ABC transmembrane type-1 domain. Residues 133-155 (KQTIDSMNIAWDDPTVALPAAIG) lie on the Mitochondrial intermembrane side of the membrane. The chain crosses the membrane as a helical span at residues 156 to 179 (LTILCYGVARFGSVLFGELRNAVF). Over 180-228 (AKVAQNAIRTVSLQTFQHLMKLDLGWHLSRQTGGLTRAMDRGTKGISQV) the chain is Mitochondrial matrix. The chain crosses the membrane as a helical span at residues 229 to 252 (LTAMVFHIIPISFEISVVCGILTY). Position 253 (Q253) is a topological domain, mitochondrial intermembrane. Residues 254 to 274 (FGASFAAITFSTMLLYSIFTI) traverse the membrane as a helical segment. At 275-340 (KTTAWRTHFR…SQIKVSQSLA (66 aa)) the chain is on the mitochondrial matrix side. Glutathione-binding positions include 280–284 (RTHFR) and 343–346 (NSGQ). A helical transmembrane segment spans residues 341–359 (FLNSGQNLIFTTALTAMMY). The Mitochondrial intermembrane portion of the chain corresponds to 360 to 374 (MGCTGVIGGNLTVGD). A helical transmembrane segment spans residues 375-396 (LVLINQLVFQLSVPLNFLGSVY). A glutathione-binding site is contributed by G393. The Mitochondrial matrix segment spans residues 397-690 (RDLKQSLIDM…ENELKDQQEL (294 aa)). Positions 436–672 (ITFENVTFGY…PGSLYRELWT (237 aa)) constitute an ABC transporter domain. ATP-binding positions include Y445 and 469–480 (GSSGSGKSTILK).

This sequence belongs to the ABC transporter superfamily. ABCB family. Heavy Metal importer (TC 3.A.1.210) subfamily. As to quaternary structure, homodimer.

The protein localises to the mitochondrion inner membrane. Functionally, performs an essential function in the generation of cytoplasmic iron-sulfur proteins by mediating the ATP-dependent export of Fe/S cluster precursors synthesized by NFS1 and other mitochondrial proteins. Hydrolyzes ATP. Binds glutathione and may function by transporting a glutathione-conjugated iron-sulfur compound. The sequence is that of Iron-sulfur clusters transporter ATM1, mitochondrial from Saccharomyces cerevisiae (strain ATCC 204508 / S288c) (Baker's yeast).